The primary structure comprises 318 residues: 1-aminocyclopropane-1-carboxylate oxidase 1 (318 aa).

The Fe2OG dioxygenase domain occupies 153 to 254 (PTFGTKVSNY…RMSIASFYNP (102 aa)). 3 residues coordinate Fe cation: His177, Asp179, and His234.

This sequence belongs to the iron/ascorbate-dependent oxidoreductase family. Requires Fe cation as cofactor. Fruit.

It catalyses the reaction 1-aminocyclopropane-1-carboxylate + L-ascorbate + O2 = ethene + L-dehydroascorbate + hydrogen cyanide + CO2 + 2 H2O. The protein operates within alkene biosynthesis; ethylene biosynthesis via S-adenosyl-L-methionine; ethylene from S-adenosyl-L-methionine: step 2/2. The polypeptide is 1-aminocyclopropane-1-carboxylate oxidase 1 (ACO1) (Cucumis melo (Muskmelon)).